Here is a 359-residue protein sequence, read N- to C-terminus: Fructose-like permease IIC component 2 (359 aa).

The PTS EIIC type-2 domain occupies 11 to 344 (TRQHLMTGVS…KSLARKNGSS (334 aa)). A run of 9 helical transmembrane segments spans residues 19-39 (VSHM…SVML), 60-80 (IGVA…GYSI), 99-119 (FGAG…VVHY), 135-155 (IFII…WGLG), 176-196 (SIVM…GGPV), 216-236 (VAIA…ATLI), 251-271 (AALV…AAAD), 290-310 (AALV…LPVV), and 314-334 (LGYI…VNVL).

The protein localises to the cell inner membrane. The phosphoenolpyruvate-dependent sugar phosphotransferase system (PTS), a major carbohydrate active -transport system, catalyzes the phosphorylation of incoming sugar substrates concomitant with their translocation across the cell membrane. The sequence is that of Fructose-like permease IIC component 2 (frwC) from Escherichia coli (strain K12).